The chain runs to 142 residues: HTH-type transcriptional regulator MntR (142 aa).

One can recognise an HTH dtxR-type domain in the interval 1–63 (MPTPSMEDYI…YEKYRGLILT (63 aa)). Asp8, Glu11, His77, Glu99, Glu102, and His103 together coordinate Mn(2+).

This sequence belongs to the DtxR/MntR family. In terms of assembly, homodimer.

Its subcellular location is the cytoplasm. Its activity is regulated as follows. DNA binding is strongly activated by Mn(2+). In terms of biological role, central regulator of manganese homeostasis. In Listeria monocytogenes serotype 4b (strain F2365), this protein is HTH-type transcriptional regulator MntR.